We begin with the raw amino-acid sequence, 435 residues long: Bifunctional protein GlmU (435 aa).

A pyrophosphorylase region spans residues 1-224; it reads MNDTSIIILA…EQNFMGINDK (224 aa). UDP-N-acetyl-alpha-D-glucosamine contacts are provided by residues 9-12, lysine 23, glutamine 75, and 82-83; these read LAAG and GT. Aspartate 103 contributes to the Mg(2+) binding site. Residues glycine 136, glutamate 150, asparagine 165, and asparagine 222 each contribute to the UDP-N-acetyl-alpha-D-glucosamine site. Asparagine 222 is a binding site for Mg(2+). Residues 225–245 are linker; that stretch reads FQLSVAEKIMQDEIKQDLMKA. Residues 246 to 435 are N-acetyltransferase; sequence GVLMRLPESI…KFFGKNNAEK (190 aa). The UDP-N-acetyl-alpha-D-glucosamine site is built by arginine 309 and lysine 326. The active-site Proton acceptor is histidine 337. The UDP-N-acetyl-alpha-D-glucosamine site is built by tyrosine 340 and asparagine 351. Acetyl-CoA contacts are provided by residues 360 to 361, serine 379, alanine 397, and arginine 414; that span reads NY.

It in the N-terminal section; belongs to the N-acetylglucosamine-1-phosphate uridyltransferase family. This sequence in the C-terminal section; belongs to the transferase hexapeptide repeat family. Homotrimer. Mg(2+) serves as cofactor.

The protein localises to the cytoplasm. The enzyme catalyses alpha-D-glucosamine 1-phosphate + acetyl-CoA = N-acetyl-alpha-D-glucosamine 1-phosphate + CoA + H(+). The catalysed reaction is N-acetyl-alpha-D-glucosamine 1-phosphate + UTP + H(+) = UDP-N-acetyl-alpha-D-glucosamine + diphosphate. It functions in the pathway nucleotide-sugar biosynthesis; UDP-N-acetyl-alpha-D-glucosamine biosynthesis; N-acetyl-alpha-D-glucosamine 1-phosphate from alpha-D-glucosamine 6-phosphate (route II): step 2/2. Its pathway is nucleotide-sugar biosynthesis; UDP-N-acetyl-alpha-D-glucosamine biosynthesis; UDP-N-acetyl-alpha-D-glucosamine from N-acetyl-alpha-D-glucosamine 1-phosphate: step 1/1. The protein operates within bacterial outer membrane biogenesis; LPS lipid A biosynthesis. Catalyzes the last two sequential reactions in the de novo biosynthetic pathway for UDP-N-acetylglucosamine (UDP-GlcNAc). The C-terminal domain catalyzes the transfer of acetyl group from acetyl coenzyme A to glucosamine-1-phosphate (GlcN-1-P) to produce N-acetylglucosamine-1-phosphate (GlcNAc-1-P), which is converted into UDP-GlcNAc by the transfer of uridine 5-monophosphate (from uridine 5-triphosphate), a reaction catalyzed by the N-terminal domain. This is Bifunctional protein GlmU from Campylobacter curvus (strain 525.92).